The chain runs to 337 residues: Phenylalanine--tRNA ligase alpha subunit (337 aa).

Residue Glu-252 participates in Mg(2+) binding.

Belongs to the class-II aminoacyl-tRNA synthetase family. Phe-tRNA synthetase alpha subunit type 1 subfamily. In terms of assembly, tetramer of two alpha and two beta subunits. It depends on Mg(2+) as a cofactor.

The protein localises to the cytoplasm. The catalysed reaction is tRNA(Phe) + L-phenylalanine + ATP = L-phenylalanyl-tRNA(Phe) + AMP + diphosphate + H(+). The polypeptide is Phenylalanine--tRNA ligase alpha subunit (Francisella philomiragia subsp. philomiragia (strain ATCC 25017 / CCUG 19701 / FSC 153 / O#319-036)).